We begin with the raw amino-acid sequence, 124 residues long: ATP synthase subunit H, mitochondrial (124 aa).

The transit peptide at 1-32 (MFPIASRRILLNASVLPLRLCNRNFTTTRISY) directs the protein to the mitochondrion. A disordered region spans residues 89–124 (NVETAHVAKESEEGESEPIEEDWLVLDDAEETKESH). Residues 100-124 (EEGESEPIEEDWLVLDDAEETKESH) are compositionally biased toward acidic residues.

This sequence belongs to the ATPase h subunit family. F-type ATPases have 2 components, CF(1) - the catalytic core - and CF(0) - the membrane proton channel. In yeast, the dimeric form of ATP synthase consists of 17 polypeptides: alpha, beta, gamma, delta, epsilon, 4 (B), 5 (OSCP), 6 (A), 8, 9 (C), d, E (Tim11), f, g, h, i/j and k.

It localises to the mitochondrion. The protein resides in the mitochondrion inner membrane. Mitochondrial membrane ATP synthase (F(1)F(0) ATP synthase or Complex V) produces ATP from ADP in the presence of a proton gradient across the membrane which is generated by electron transport complexes of the respiratory chain. F-type ATPases consist of two structural domains, F(1) - containing the extramembraneous catalytic core and F(0) - containing the membrane proton channel, linked together by a central stalk and a peripheral stalk. During catalysis, ATP synthesis in the catalytic domain of F(1) is coupled via a rotary mechanism of the central stalk subunits to proton translocation. Part of the complex F(0) domain. Minor subunit located with subunit a in the membrane. This Saccharomyces cerevisiae (strain ATCC 204508 / S288c) (Baker's yeast) protein is ATP synthase subunit H, mitochondrial (ATP14).